Reading from the N-terminus, the 251-residue chain is Hydroxyacylglutathione hydrolase (251 aa).

The Zn(2+) site is built by His53, His55, Asp57, His58, His110, Asp127, and His165.

This sequence belongs to the metallo-beta-lactamase superfamily. Glyoxalase II family. As to quaternary structure, monomer. It depends on Zn(2+) as a cofactor.

It carries out the reaction an S-(2-hydroxyacyl)glutathione + H2O = a 2-hydroxy carboxylate + glutathione + H(+). The protein operates within secondary metabolite metabolism; methylglyoxal degradation; (R)-lactate from methylglyoxal: step 2/2. Thiolesterase that catalyzes the hydrolysis of S-D-lactoyl-glutathione to form glutathione and D-lactic acid. The sequence is that of Hydroxyacylglutathione hydrolase from Escherichia coli (strain SE11).